The following is a 293-amino-acid chain: Glycine--tRNA ligase alpha subunit (293 aa).

The protein belongs to the class-II aminoacyl-tRNA synthetase family. As to quaternary structure, tetramer of two alpha and two beta subunits.

The protein resides in the cytoplasm. It catalyses the reaction tRNA(Gly) + glycine + ATP = glycyl-tRNA(Gly) + AMP + diphosphate. In Aliarcobacter butzleri (strain RM4018) (Arcobacter butzleri), this protein is Glycine--tRNA ligase alpha subunit.